A 60-amino-acid polypeptide reads, in one-letter code: Single-pass membrane and coiled-coil domain-containing protein 4 homolog (60 aa).

A disordered region spans residues Met1–Glu21. Residues Gln8–Glu21 are compositionally biased toward basic and acidic residues. Residues Lys10–Ile33 adopt a coiled-coil conformation. The chain crosses the membrane as a helical span at residues Thr32–Lys52.

Belongs to the SMCO4 family.

Its subcellular location is the membrane. In Aedes aegypti (Yellowfever mosquito), this protein is Single-pass membrane and coiled-coil domain-containing protein 4 homolog.